The primary structure comprises 65 residues: DNA-directed RNA polymerase subunit Rpo10 (65 aa).

Residues C7, C10, C44, and C45 each contribute to the Zn(2+) site.

It belongs to the archaeal Rpo10/eukaryotic RPB10 RNA polymerase subunit family. As to quaternary structure, part of the RNA polymerase complex. Zn(2+) serves as cofactor.

The protein resides in the cytoplasm. The catalysed reaction is RNA(n) + a ribonucleoside 5'-triphosphate = RNA(n+1) + diphosphate. DNA-dependent RNA polymerase (RNAP) catalyzes the transcription of DNA into RNA using the four ribonucleoside triphosphates as substrates. The protein is DNA-directed RNA polymerase subunit Rpo10 of Pyrococcus furiosus (strain ATCC 43587 / DSM 3638 / JCM 8422 / Vc1).